Reading from the N-terminus, the 198-residue chain is Small ribosomal subunit protein uS7 (198 aa).

It belongs to the universal ribosomal protein uS7 family. As to quaternary structure, part of the 30S ribosomal subunit.

Functionally, one of the primary rRNA binding proteins, it binds directly to 16S rRNA where it nucleates assembly of the head domain of the 30S subunit. Is located at the subunit interface close to the decoding center. The chain is Small ribosomal subunit protein uS7 from Desulfurococcus mucosus (Desulfurococcus mobilis).